The chain runs to 363 residues: Aminomethyltransferase (363 aa).

The protein belongs to the GcvT family. In terms of assembly, the glycine cleavage system is composed of four proteins: P, T, L and H.

It carries out the reaction N(6)-[(R)-S(8)-aminomethyldihydrolipoyl]-L-lysyl-[protein] + (6S)-5,6,7,8-tetrahydrofolate = N(6)-[(R)-dihydrolipoyl]-L-lysyl-[protein] + (6R)-5,10-methylene-5,6,7,8-tetrahydrofolate + NH4(+). Functionally, the glycine cleavage system catalyzes the degradation of glycine. This is Aminomethyltransferase from Thermosipho melanesiensis (strain DSM 12029 / CIP 104789 / BI429).